The sequence spans 238 residues: Ribosomal RNA large subunit methyltransferase E (238 aa).

S-adenosyl-L-methionine contacts are provided by glycine 85, tryptophan 87, aspartate 113, aspartate 129, and aspartate 153. Catalysis depends on lysine 193, which acts as the Proton acceptor.

Belongs to the class I-like SAM-binding methyltransferase superfamily. RNA methyltransferase RlmE family.

The protein localises to the cytoplasm. The enzyme catalyses uridine(2552) in 23S rRNA + S-adenosyl-L-methionine = 2'-O-methyluridine(2552) in 23S rRNA + S-adenosyl-L-homocysteine + H(+). Functionally, specifically methylates the uridine in position 2552 of 23S rRNA at the 2'-O position of the ribose in the fully assembled 50S ribosomal subunit. The chain is Ribosomal RNA large subunit methyltransferase E from Ruegeria sp. (strain TM1040) (Silicibacter sp.).